Here is a 221-residue protein sequence, read N- to C-terminus: Ribonuclease P protein subunit p29 (221 aa).

A Phosphoserine modification is found at Ser10.

The protein belongs to the eukaryotic/archaeal RNase P protein component 1 family. Component of nuclear RNase P and RNase MRP ribonucleoproteins. RNase P consists of a catalytic RNA moiety and 10 different protein chains; POP1, POP4, POP5, POP7, RPP14, RPP21, RPP25, RPP30, RPP38 and RPP40. Within the RNase P complex, POP1, POP7 and RPP25 form the 'finger' subcomplex, POP5, RPP14, RPP40 and homodimeric RPP30 form the 'palm' subcomplex, and RPP21, POP4 and RPP38 form the 'wrist' subcomplex. All subunits of the RNase P complex interact with the catalytic RNA. Several subunits of RNase P are also part of the RNase MRP complex. RNase MRP consists of a catalytic RNA moiety and about 8 protein subunits; POP1, POP7, RPP25, RPP30, RPP38, RPP40 and possibly also POP4 and POP5.

It is found in the nucleus. The protein localises to the nucleolus. In terms of biological role, component of ribonuclease P, a ribonucleoprotein complex that generates mature tRNA molecules by cleaving their 5'-ends. The sequence is that of Ribonuclease P protein subunit p29 (Pop4) from Mus musculus (Mouse).